Reading from the N-terminus, the 509-residue chain is Putative Rieske 2Fe-2S iron-sulfur protein YhfW (509 aa).

A Rieske domain is found at lysine 423 to aspartate 509. [2Fe-2S] cluster is bound by residues cysteine 463, histidine 465, cysteine 481, and histidine 484. Residues cysteine 468 and cysteine 483 are joined by a disulfide bond.

The protein belongs to the Rieske iron-sulfur protein family. Requires [2Fe-2S] cluster as cofactor.

This is Putative Rieske 2Fe-2S iron-sulfur protein YhfW (yhfW) from Bacillus subtilis (strain 168).